A 170-amino-acid chain; its full sequence is Ribosome maturation factor RimP (170 aa).

Belongs to the RimP family.

It localises to the cytoplasm. In terms of biological role, required for maturation of 30S ribosomal subunits. In Acidothermus cellulolyticus (strain ATCC 43068 / DSM 8971 / 11B), this protein is Ribosome maturation factor RimP.